Reading from the N-terminus, the 143-residue chain is Putative pre-16S rRNA nuclease (143 aa).

Belongs to the YqgF nuclease family.

It is found in the cytoplasm. Its function is as follows. Could be a nuclease involved in processing of the 5'-end of pre-16S rRNA. The protein is Putative pre-16S rRNA nuclease of Ralstonia pickettii (strain 12J).